The primary structure comprises 437 residues: 26S proteasome subunit RPT4 (437 aa).

A disordered region spans residues 1–51 (MSEEQDPLLAGLGETSGDNHTQQSHEQQPEQPQETEEHHEEEPSRVDPEQE). Serine 2 is subject to N-acetylserine. Residues 20–32 (HTQQSHEQQPEQP) are compositionally biased toward low complexity. Positions 35 to 51 (TEEHHEEEPSRVDPEQE) are enriched in basic and acidic residues. Residue 222–229 (GPPGTGKT) participates in ATP binding.

The protein belongs to the AAA ATPase family. N-acetylated by NAT1.

The 26S proteasome is involved in the ATP-dependent degradation of ubiquitinated proteins. The regulatory (or ATPase) complex confers ATP dependency and substrate specificity to the 26S complex. The polypeptide is 26S proteasome subunit RPT4 (RPT4) (Saccharomyces cerevisiae (strain ATCC 204508 / S288c) (Baker's yeast)).